The following is a 32-amino-acid chain: Delta-conotoxin-like CnVID (32 aa).

3 cysteine pairs are disulfide-bonded: Cys-3-Cys-18, Cys-10-Cys-22, and Cys-17-Cys-27. 4-hydroxyproline is present on residues Pro-6 and Pro-14.

The protein belongs to the conotoxin O1 superfamily. As to expression, expressed by the venom duct.

It is found in the secreted. Functionally, delta-conotoxins bind to site 6 of voltage-gated sodium channels (Nav) and inhibit the inactivation process. This toxin acts on Nav1.2/SCN2A, Nav1.3/SCN3A and Nav1.6/SCN8A (EC(50)=1.7 uM). This is Delta-conotoxin-like CnVID from Conus consors (Singed cone).